The primary structure comprises 394 residues: Phosphoglycerate kinase (394 aa).

Substrate is bound by residues 21–23, Arg36, 59–62, Arg118, and Arg151; these read DFN and HLGR. Ser183 is subject to Phosphoserine. ATP is bound at residue Lys201. Thr299 carries the post-translational modification Phosphothreonine. ATP contacts are provided by residues Asn316, Glu323, and 350-353; that span reads GGDS.

This sequence belongs to the phosphoglycerate kinase family. In terms of assembly, monomer.

The protein localises to the cytoplasm. It carries out the reaction (2R)-3-phosphoglycerate + ATP = (2R)-3-phospho-glyceroyl phosphate + ADP. Its pathway is carbohydrate degradation; glycolysis; pyruvate from D-glyceraldehyde 3-phosphate: step 2/5. This Geobacillus stearothermophilus (Bacillus stearothermophilus) protein is Phosphoglycerate kinase.